Consider the following 243-residue polypeptide: Transcription factor TFIIS homolog (243 aa).

Residues 77 to 201 (MRDIIQMMFF…SQQKVAEKTS (125 aa)) enclose the TFIIS central domain. The TFIIS-type zinc finger occupies 202–242 (QLYKCPNCKQRMCTYREVQTRALDEPSTIFCTCKKCGHEFI). Zn(2+) contacts are provided by Cys206, Cys209, Cys234, and Cys237.

It belongs to the TFS-II family.

Functionally, putative initiation factor. Necessary for efficient transcription elongation past template-encoded arresting sites. This is Transcription factor TFIIS homolog from Ornithodoros (relapsing fever ticks).